A 264-amino-acid polypeptide reads, in one-letter code: Glutamate racemase (264 aa).

Substrate contacts are provided by residues 10–11 (DS) and 42–43 (YG). The active-site Proton donor/acceptor is the cysteine 73. 74–75 (NT) contacts substrate. Catalysis depends on cysteine 181, which acts as the Proton donor/acceptor. 182 to 183 (TH) lines the substrate pocket.

Belongs to the aspartate/glutamate racemases family.

The catalysed reaction is L-glutamate = D-glutamate. It participates in cell wall biogenesis; peptidoglycan biosynthesis. Functionally, provides the (R)-glutamate required for cell wall biosynthesis. In Thermoanaerobacter pseudethanolicus (strain ATCC 33223 / 39E) (Clostridium thermohydrosulfuricum), this protein is Glutamate racemase.